The sequence spans 205 residues: MPGLLGKKIGMTSVFSAEGKNLPCTVIEVGPCVVTQVKTLEKDGYSALQLGFVDAKEKHTTKPLAGHFKKANVAPKRHLAEFKNFEGEHKLGDVLNVEFFSDADFVDVVGTSKGKGFQGVVKRHGFGGVGQATHGQHNRLRAPGAVGACSYPAKVFKGTRMAGQMGNERVTVQNLEVIKVMPEHNLLLVKGSVPGAKGSILLIEK.

It belongs to the universal ribosomal protein uL3 family. As to quaternary structure, part of the 50S ribosomal subunit. Forms a cluster with proteins L14 and L19.

One of the primary rRNA binding proteins, it binds directly near the 3'-end of the 23S rRNA, where it nucleates assembly of the 50S subunit. The sequence is that of Large ribosomal subunit protein uL3 from Porphyromonas gingivalis (strain ATCC 33277 / DSM 20709 / CIP 103683 / JCM 12257 / NCTC 11834 / 2561).